The primary structure comprises 354 residues: Uroporphyrinogen decarboxylase (354 aa).

Substrate contacts are provided by residues 30 to 34 (RQAGR), D79, Y154, S209, and H333.

This sequence belongs to the uroporphyrinogen decarboxylase family. Homodimer.

It localises to the cytoplasm. The catalysed reaction is uroporphyrinogen III + 4 H(+) = coproporphyrinogen III + 4 CO2. It participates in porphyrin-containing compound metabolism; protoporphyrin-IX biosynthesis; coproporphyrinogen-III from 5-aminolevulinate: step 4/4. Its function is as follows. Catalyzes the decarboxylation of four acetate groups of uroporphyrinogen-III to yield coproporphyrinogen-III. This Mycolicibacterium vanbaalenii (strain DSM 7251 / JCM 13017 / BCRC 16820 / KCTC 9966 / NRRL B-24157 / PYR-1) (Mycobacterium vanbaalenii) protein is Uroporphyrinogen decarboxylase.